The sequence spans 413 residues: Eukaryotic initiation factor 4A-8 (413 aa).

The Q motif signature appears at 40 to 68; sequence DSFDAMGLQENLLRGIYAYGFEKPSAIQQ. One can recognise a Helicase ATP-binding domain in the interval 71–241; that stretch reads IVPFCKGLDV…RKFMNKPVRI (171 aa). 84–91 is a binding site for ATP; it reads AQSGTGKT. Residues 189 to 192 carry the DEAD box motif; the sequence is DEAD. Positions 252–413 constitute a Helicase C-terminal domain; sequence GIKQFYVNVD…ELPSNVADLL (162 aa).

The protein belongs to the DEAD box helicase family. eIF4A subfamily. As to quaternary structure, eIF4F is a multi-subunit complex, the composition of which varies with external and internal environmental conditions. It is composed of at least EIF4A, EIF4E and EIF4G. Pollen specific.

It carries out the reaction ATP + H2O = ADP + phosphate + H(+). ATP-dependent RNA helicase which is a subunit of the eIF4F complex involved in cap recognition and is required for mRNA binding to ribosome. In the current model of translation initiation, eIF4A unwinds RNA secondary structures in the 5'-UTR of mRNAs which is necessary to allow efficient binding of the small ribosomal subunit, and subsequent scanning for the initiator codon. This is Eukaryotic initiation factor 4A-8 from Nicotiana tabacum (Common tobacco).